Here is a 379-residue protein sequence, read N- to C-terminus: Glucose-1-phosphate adenylyltransferase (379 aa).

Alpha-D-glucose 1-phosphate contacts are provided by residues G164, 179–180 (EK), and S190.

The protein belongs to the bacterial/plant glucose-1-phosphate adenylyltransferase family. In terms of assembly, homotetramer.

The enzyme catalyses alpha-D-glucose 1-phosphate + ATP + H(+) = ADP-alpha-D-glucose + diphosphate. It participates in glycan biosynthesis; glycogen biosynthesis. Its function is as follows. Involved in the biosynthesis of ADP-glucose, a building block required for the elongation reactions to produce glycogen. Catalyzes the reaction between ATP and alpha-D-glucose 1-phosphate (G1P) to produce pyrophosphate and ADP-Glc. This chain is Glucose-1-phosphate adenylyltransferase, found in Lactiplantibacillus plantarum (strain ATCC BAA-793 / NCIMB 8826 / WCFS1) (Lactobacillus plantarum).